Consider the following 280-residue polypeptide: 4-diphosphocytidyl-2-C-methyl-D-erythritol kinase (280 aa).

K9 is an active-site residue. 93 to 103 contributes to the ATP binding site; the sequence is PVAAGLGGGSS. D135 is an active-site residue.

It belongs to the GHMP kinase family. IspE subfamily.

It carries out the reaction 4-CDP-2-C-methyl-D-erythritol + ATP = 4-CDP-2-C-methyl-D-erythritol 2-phosphate + ADP + H(+). It functions in the pathway isoprenoid biosynthesis; isopentenyl diphosphate biosynthesis via DXP pathway; isopentenyl diphosphate from 1-deoxy-D-xylulose 5-phosphate: step 3/6. Its function is as follows. Catalyzes the phosphorylation of the position 2 hydroxy group of 4-diphosphocytidyl-2C-methyl-D-erythritol. The protein is 4-diphosphocytidyl-2-C-methyl-D-erythritol kinase of Syntrophotalea carbinolica (strain DSM 2380 / NBRC 103641 / GraBd1) (Pelobacter carbinolicus).